The primary structure comprises 346 residues: Phosphoribosylformylglycinamidine cyclo-ligase (346 aa).

The protein belongs to the AIR synthase family.

The protein resides in the cytoplasm. The enzyme catalyses 2-formamido-N(1)-(5-O-phospho-beta-D-ribosyl)acetamidine + ATP = 5-amino-1-(5-phospho-beta-D-ribosyl)imidazole + ADP + phosphate + H(+). The protein operates within purine metabolism; IMP biosynthesis via de novo pathway; 5-amino-1-(5-phospho-D-ribosyl)imidazole from N(2)-formyl-N(1)-(5-phospho-D-ribosyl)glycinamide: step 2/2. This chain is Phosphoribosylformylglycinamidine cyclo-ligase, found in Vibrio atlanticus (strain LGP32) (Vibrio splendidus (strain Mel32)).